A 173-amino-acid polypeptide reads, in one-letter code: MASRKTKKKEGGALRAQRASSNVFSNFEQTQIQEFKEAFTLMDQNRDGFIDKEDLKDTYASLGKTNVKDDELDAMLKEASGPINFTMFLNLFGEKLSGTDAEETILNAFKMLDPDGKGKINKEYIKRLLMSQADKMTAEEVDQMFQFASIDVAGNLDYKALSYVITHGEEKEE.

A disordered region spans residues 1–20; it reads MASRKTKKKEGGALRAQRAS. EF-hand domains follow at residues 30-65, 100-135, and 136-171; these read TQIQEFKEAFTLMDQNRDGFIDKEDLKDTYASLGKT, DAEETILNAFKMLDPDGKGKINKEYIKRLLMSQADK, and MTAEEVDQMFQFASIDVAGNLDYKALSYVITHGEEK. 4 residues coordinate Ca(2+): aspartate 43, asparagine 45, aspartate 47, and aspartate 54.

As to quaternary structure, myosin is a hexamer of 2 heavy chains and 4 light chains. Expressed in fetal skeletal muscle and retina.

This chain is Myosin light chain 5 (MYL5), found in Homo sapiens (Human).